A 616-amino-acid polypeptide reads, in one-letter code: MALLQISEPGLSAAPHQRRLAAGIDLGTTNSLVATVRSGQAETLADAEGRDLLPSVVHYQADTLRVGWDARQQAAQDPANTISSVKRMMGRSLADVLARYPNLPYQFQASDNGLPMMLTAAGAVNPVGVSADILRALAERAKTALEGDLDGVVITVPAYFDDAQRQGTKDAARLAGLHVLRLLNEPTAAAIAYGLDSGQEGIIAVYDLGGGTFDISILRLSRGVFEVLATGGDSALGGDDFDHLLADWLREQAGVADRSDHGVQRQLLDAAIAAKVALSDADSTVVEIAGWQGEVTRAQFDALIATLVKRTLMACRRALKDAGVSAEEVLEVVMVGGSTRVPLVREQVGTFFGRTPLTSIDPDKVVAIGAAIQADILVGNKPDSDMLLLDVIPLSLGLETMGGLVEKVIPRNTTIPVARAQEFTTFKDGQSAMMIHVLQGERELVQDCRSLARFSLRGLPPLPAGGAHIRVTFQVDADGLLSVTAMEKSTGVEASIQVKPSYGLSDAEIAGMIKDSMANAQSDVGARMLAEQRVEASRVLESLQGALASDAALLSEAESTAIPAAVEALQQATQGTDPAAIEAAIKTLDAQTQDFAARRMDASIRRALAGHSVDEV.

The protein belongs to the heat shock protein 70 family.

In terms of biological role, chaperone involved in the maturation of iron-sulfur cluster-containing proteins. Has a low intrinsic ATPase activity which is markedly stimulated by HscB. Involved in the maturation of IscU. This is Chaperone protein HscA from Serratia proteamaculans (strain 568).